The primary structure comprises 295 residues: uncharacterized protein (295 aa).

In terms of domain architecture, HTH araC/xylS-type spans 8–106 (QKTINWIESH…HMPPGAYRTF (99 aa)). The segment at residues 25–46 (EDIVNVSSFSKFHFHRIFQKEV) is a DNA-binding region (H-T-H motif).

Probable transcriptional regulator. This is an uncharacterized protein from Bacillus subtilis (strain 168).